The sequence spans 470 residues: Synaptotagmin-17 (470 aa).

Positions Pro54 to Arg112 are disordered. A compositionally biased stretch (low complexity) spans Ser92–Arg112. 2 positions are modified to phosphoserine: Ser114 and Ser115. 2 consecutive C2 domains span residues Gln180–Lys306 and Glu317–His451.

Belongs to the synaptotagmin family.

Its subcellular location is the membrane. In terms of biological role, plays a role in dendrite formation by melanocytes. The protein is Synaptotagmin-17 (Syt17) of Mus musculus (Mouse).